A 1054-amino-acid polypeptide reads, in one-letter code: Translation initiation factor IF-2 (1054 aa).

Disordered stretches follow at residues 48-390 (RSKL…LDLD) and 409-458 (LARP…GTEP). Residues 65-76 (KPPSESLPPEPP) are compositionally biased toward pro residues. The segment covering 160–169 (SEATQKPETV) has biased composition (polar residues). Residues 179–193 (SESAAAKASGSEPSP) are compositionally biased toward low complexity. Pro residues-rich tracts occupy residues 221 to 235 (PQKA…PSEA) and 304 to 316 (PTRP…PPEP). The segment covering 365-378 (RAARVQAKRKRSRR) has biased composition (basic residues). The span at 421–437 (PPAATAAPPARPRPAAR) shows a compositional bias: low complexity. One can recognise a tr-type G domain in the interval 545 to 718 (SRPPVVTIMG…LLVADVAELQ (174 aa)). Positions 554-561 (GHVDHGKT) are G1. 554–561 (GHVDHGKT) contributes to the GTP binding site. The G2 stretch occupies residues 579-583 (GITQR). The segment at 604–607 (DTPG) is G3. GTP is bound by residues 604–608 (DTPGH) and 658–661 (NKID). The tract at residues 658 to 661 (NKID) is G4. A G5 region spans residues 694-696 (SAL).

This sequence belongs to the TRAFAC class translation factor GTPase superfamily. Classic translation factor GTPase family. IF-2 subfamily.

The protein resides in the cytoplasm. Functionally, one of the essential components for the initiation of protein synthesis. Protects formylmethionyl-tRNA from spontaneous hydrolysis and promotes its binding to the 30S ribosomal subunits. Also involved in the hydrolysis of GTP during the formation of the 70S ribosomal complex. The chain is Translation initiation factor IF-2 from Synechococcus sp. (strain JA-2-3B'a(2-13)) (Cyanobacteria bacterium Yellowstone B-Prime).